Reading from the N-terminus, the 319-residue chain is Tryptophan--tRNA ligase (319 aa).

Residues 8 to 10 (QPS) and 16 to 17 (GN) contribute to the ATP site. The 'HIGH' region motif lies at 9-17 (PSGDLHIGN). L-tryptophan is bound at residue Asp-131. ATP is bound by residues 143–145 (GKD), Val-182, and 189–193 (KMSKS). A 'KMSKS' region motif is present at residues 189 to 193 (KMSKS).

The protein belongs to the class-I aminoacyl-tRNA synthetase family. As to quaternary structure, homodimer.

The protein resides in the cytoplasm. The catalysed reaction is tRNA(Trp) + L-tryptophan + ATP = L-tryptophyl-tRNA(Trp) + AMP + diphosphate + H(+). Catalyzes the attachment of tryptophan to tRNA(Trp). This is Tryptophan--tRNA ligase from Campylobacter jejuni subsp. jejuni serotype O:2 (strain ATCC 700819 / NCTC 11168).